The sequence spans 591 residues: uncharacterized protein (591 aa).

A signal peptide spans 1 to 30; it reads MGKLLFGKLVFKKSLFLLSGMSSLAVFLTA. Residue cysteine 31 is the site of N-palmitoyl cysteine attachment. Residue cysteine 31 is the site of S-diacylglycerol cysteine attachment. Over residues 476–488 the composition is skewed to basic and acidic residues; sequence KKKLSEVATKKNE. Disordered stretches follow at residues 476–497 and 510–535; these read KKKL…NGSN and SSSS…DNDG. Over residues 510–523 the composition is skewed to low complexity; sequence SSSSTSMRNGSSDS.

The protein to T.pallidum TmpC.

It localises to the cell membrane. This is an uncharacterized protein from Mycoplasma genitalium (strain ATCC 33530 / DSM 19775 / NCTC 10195 / G37) (Mycoplasmoides genitalium).